The following is a 251-amino-acid chain: CDP-diacylglycerol pyrophosphatase (251 aa).

The helical transmembrane segment at 4–24 threads the bilayer; that stretch reads AGLLFLVMIVIAVVAAGIGYW.

The protein belongs to the Cdh family.

It localises to the cell inner membrane. It catalyses the reaction a CDP-1,2-diacyl-sn-glycerol + H2O = a 1,2-diacyl-sn-glycero-3-phosphate + CMP + 2 H(+). The protein operates within phospholipid metabolism; CDP-diacylglycerol degradation; phosphatidate from CDP-diacylglycerol: step 1/1. This chain is CDP-diacylglycerol pyrophosphatase, found in Escherichia coli (strain ATCC 8739 / DSM 1576 / NBRC 3972 / NCIMB 8545 / WDCM 00012 / Crooks).